We begin with the raw amino-acid sequence, 210 residues long: Large ribosomal subunit protein uL3 (210 aa).

The disordered stretch occupies residues valine 126 to arginine 150.

The protein belongs to the universal ribosomal protein uL3 family. As to quaternary structure, part of the 50S ribosomal subunit. Forms a cluster with proteins L14 and L19.

One of the primary rRNA binding proteins, it binds directly near the 3'-end of the 23S rRNA, where it nucleates assembly of the 50S subunit. This is Large ribosomal subunit protein uL3 from Tropheryma whipplei (strain TW08/27) (Whipple's bacillus).